We begin with the raw amino-acid sequence, 187 residues long: V-type ATP synthase subunit E (187 aa).

Belongs to the V-ATPase E subunit family.

Produces ATP from ADP in the presence of a proton gradient across the membrane. This chain is V-type ATP synthase subunit E, found in Geotalea uraniireducens (strain Rf4) (Geobacter uraniireducens).